We begin with the raw amino-acid sequence, 161 residues long: Peroxynitrite isomerase (161 aa).

Positions 17-23 (GSWVGRG) match the GXWXGXG motif. H152 contributes to the heme b binding site.

This sequence belongs to the nitrobindin family. In terms of assembly, homodimer. Heme b serves as cofactor.

The catalysed reaction is peroxynitrite = nitrate. It functions in the pathway nitrogen metabolism. Its function is as follows. Heme-binding protein able to scavenge peroxynitrite and to protect free L-tyrosine against peroxynitrite-mediated nitration, by acting as a peroxynitrite isomerase that converts peroxynitrite to nitrate. Therefore, this protein likely plays a role in peroxynitrite sensing and in the detoxification of reactive nitrogen and oxygen species (RNS and ROS, respectively). Is able to bind nitric oxide (NO) in vitro, but may act as a sensor of peroxynitrite levels in vivo. This is Peroxynitrite isomerase from Mycobacterium leprae (strain TN).